Reading from the N-terminus, the 162-residue chain is Serine-protein kinase RsbW (162 aa).

The protein belongs to the anti-sigma-factor family.

It catalyses the reaction L-seryl-[protein] + ATP = O-phospho-L-seryl-[protein] + ADP + H(+). The enzyme catalyses L-threonyl-[protein] + ATP = O-phospho-L-threonyl-[protein] + ADP + H(+). Negative regulator of sigma-B activity. Phosphorylates and inactivates its specific antagonist protein, RsbV. Upon phosphorylation of RsbV, RsbW is released and binds to sigma-B, thereby blocking its ability to form an RNA polymerase holoenzyme (E-sigma-B). This is Serine-protein kinase RsbW from Halalkalibacterium halodurans (strain ATCC BAA-125 / DSM 18197 / FERM 7344 / JCM 9153 / C-125) (Bacillus halodurans).